Here is a 176-residue protein sequence, read N- to C-terminus: ATP synthase subunit b (176 aa).

A helical transmembrane segment spans residues 27-47; sequence FFVFSFLTLILVVTIVTLLVY.

It belongs to the ATPase B chain family. In terms of assembly, F-type ATPases have 2 components, F(1) - the catalytic core - and F(0) - the membrane proton channel. F(1) has five subunits: alpha(3), beta(3), gamma(1), delta(1), epsilon(1). F(0) has three main subunits: a(1), b(2) and c(10-14). The alpha and beta chains form an alternating ring which encloses part of the gamma chain. F(1) is attached to F(0) by a central stalk formed by the gamma and epsilon chains, while a peripheral stalk is formed by the delta and b chains.

The protein resides in the cell membrane. Functionally, f(1)F(0) ATP synthase produces ATP from ADP in the presence of a proton or sodium gradient. F-type ATPases consist of two structural domains, F(1) containing the extramembraneous catalytic core and F(0) containing the membrane proton channel, linked together by a central stalk and a peripheral stalk. During catalysis, ATP synthesis in the catalytic domain of F(1) is coupled via a rotary mechanism of the central stalk subunits to proton translocation. In terms of biological role, component of the F(0) channel, it forms part of the peripheral stalk, linking F(1) to F(0). This is ATP synthase subunit b from Metamycoplasma arthritidis (strain 158L3-1) (Mycoplasma arthritidis).